A 347-amino-acid chain; its full sequence is Phosphoribosylformylglycinamidine cyclo-ligase (347 aa).

It belongs to the AIR synthase family.

It is found in the cytoplasm. It carries out the reaction 2-formamido-N(1)-(5-O-phospho-beta-D-ribosyl)acetamidine + ATP = 5-amino-1-(5-phospho-beta-D-ribosyl)imidazole + ADP + phosphate + H(+). It participates in purine metabolism; IMP biosynthesis via de novo pathway; 5-amino-1-(5-phospho-D-ribosyl)imidazole from N(2)-formyl-N(1)-(5-phospho-D-ribosyl)glycinamide: step 2/2. This chain is Phosphoribosylformylglycinamidine cyclo-ligase, found in Prochlorococcus marinus (strain MIT 9312).